We begin with the raw amino-acid sequence, 393 residues long: NAD(P)H-quinone oxidoreductase subunit H, chloroplastic (393 aa).

It belongs to the complex I 49 kDa subunit family. As to quaternary structure, NDH is composed of at least 16 different subunits, 5 of which are encoded in the nucleus.

It is found in the plastid. Its subcellular location is the chloroplast thylakoid membrane. The catalysed reaction is a plastoquinone + NADH + (n+1) H(+)(in) = a plastoquinol + NAD(+) + n H(+)(out). The enzyme catalyses a plastoquinone + NADPH + (n+1) H(+)(in) = a plastoquinol + NADP(+) + n H(+)(out). NDH shuttles electrons from NAD(P)H:plastoquinone, via FMN and iron-sulfur (Fe-S) centers, to quinones in the photosynthetic chain and possibly in a chloroplast respiratory chain. The immediate electron acceptor for the enzyme in this species is believed to be plastoquinone. Couples the redox reaction to proton translocation, and thus conserves the redox energy in a proton gradient. The protein is NAD(P)H-quinone oxidoreductase subunit H, chloroplastic of Acorus calamus var. americanus (American sweet flag).